The following is a 275-amino-acid chain: Large ribosomal subunit protein uL2 (275 aa).

Positions 212-275 are disordered; that stretch reads NRHRGIRPQT…DKLIISRRKK (64 aa). The span at 257 to 275 shows a compositional bias: basic residues; it reads YKTRRKKPSDKLIISRRKK.

This sequence belongs to the universal ribosomal protein uL2 family. As to quaternary structure, part of the 50S ribosomal subunit. Forms a bridge to the 30S subunit in the 70S ribosome.

One of the primary rRNA binding proteins. Required for association of the 30S and 50S subunits to form the 70S ribosome, for tRNA binding and peptide bond formation. It has been suggested to have peptidyltransferase activity; this is somewhat controversial. Makes several contacts with the 16S rRNA in the 70S ribosome. In Nitratiruptor sp. (strain SB155-2), this protein is Large ribosomal subunit protein uL2.